The following is a 320-amino-acid chain: Malate dehydrogenase (320 aa).

NAD(+) is bound by residues 10 to 15 (GSGMIG) and Asp34. Residues Arg83 and Arg89 each contribute to the substrate site. NAD(+)-binding positions include Asn96 and 119–121 (ITN). Substrate is bound by residues Asn121 and Arg152. The Proton acceptor role is filled by His176.

It belongs to the LDH/MDH superfamily. MDH type 3 family.

It catalyses the reaction (S)-malate + NAD(+) = oxaloacetate + NADH + H(+). In terms of biological role, catalyzes the reversible oxidation of malate to oxaloacetate. The sequence is that of Malate dehydrogenase from Brucella canis (strain ATCC 23365 / NCTC 10854 / RM-666).